The following is a 576-amino-acid chain: MAVFPIGSHFAPPHQLTKRHVIATSSPISISTRLPQNVSFSKVSGVTGSTRLSKHGVLVRAEDKIRSSSSPSSLDEPIDEDLMDSSGLCDPLCSVDEPSSSYFEANYQPKTDIIKALAILAAALTGTAAINHSWVAANQDVAMALLFGIGYAGIIFEESLAFNKSGIGLLMAVSLWVVRSIGAPSTEIAVLDLQHATAEVSEIVFFLLGAMTIVEIVDAHQGFKLVTDNITTRKPKTLLWVVGFVTFFLSSILDNLTSTIVMVSLIRKLVPQSEYRKLLGGVVVIAANAGGAWTPIGDVTTTMLWIHGQISTLPTMKDLFLPSVVSLAVPLALMSLTSEVNGKEQDPKDVLASEKMAPRGKLVFGVGLGALVFVPVFKALTGLPPYMGILLGLGVLWILTDAIHYGESERQKLKVPQALSRIDTQGALFFLGILLSVSSLEAAGILREIANYLDANIPNVELIASAIGVVSAIIDNVPLVAATMGMYDLTSFPQDSEFWQLIAFCAGTGGSMLVIGSAAGVAFMGMEKVDFFWYFRKVSGFAFAGYAAGIAAYLAVHNLHFEIPTTVAQIPFLTGS.

A chloroplast-targeting transit peptide spans 1 to 60; the sequence is MAVFPIGSHFAPPHQLTKRHVIATSSPISISTRLPQNVSFSKVSGVTGSTRLSKHGVLVR. The next 9 membrane-spanning stretches (helical) occupy residues 237-257, 279-299, 320-340, 357-377, 379-399, 426-446, 462-482, 501-521, and 541-561; these read TLLW…DNLT, LGGV…IGDV, FLPS…TSEV, APRG…VPVF, ALTG…LWIL, GALF…AGIL, LIAS…LVAA, LIAF…AAGV, and FAFA…NLHF.

Belongs to the NhaD Na(+)/H(+) (TC 2.A.62) antiporter family. As to expression, mostly expressed in mature and senescent leaves, and, to a lower extent, in seeds, roots, shoots, flowers and developing siliques.

The protein resides in the plastid. It localises to the chloroplast membrane. The protein localises to the chloroplast envelope. In terms of biological role, na(+)/H(+) antiporter that extrudes sodium in exchange for external protons. The protein is Sodium/proton antiporter 1 of Arabidopsis thaliana (Mouse-ear cress).